Here is a 280-residue protein sequence, read N- to C-terminus: uncharacterized protein (280 aa).

The first 21 residues, 1–21 (MRPAIKVGLSTASVYPLRAEA), serve as a signal peptide directing secretion.

This sequence to M.leprae ML2432 and S.coelicolor SCO3347.

This is an uncharacterized protein from Mycobacterium tuberculosis (strain CDC 1551 / Oshkosh).